The sequence spans 340 residues: Gigasin-2 (340 aa).

The N-terminal stretch at 1-21 (MNKMSPLYVLALCCLATTVFA) is a signal peptide. EGF-like domains lie at 22–57 (KYDCTNNGGYGCKYGGTCHFYGFCICPKGFQGEDCG) and 65–97 (TAANCTAECKNGGTCYESDRCYCPHGFIGDMCE). Cystine bridges form between Cys25-Cys39, Cys33-Cys45, Cys47-Cys56, Cys69-Cys79, Cys73-Cys85, and Cys87-Cys96.

In terms of tissue distribution, component of the organic matrix of calcified shell layers.

This is Gigasin-2 from Magallana gigas (Pacific oyster).